The sequence spans 78 residues: Chassatide C4 (78 aa).

Residues 1 to 23 form the signal peptide; it reads MAKFATQLFLLTASVVMLEVQSS. Positions 24–42 are cleaved as a propeptide — removed in mature form; the sequence is IVIMQDPDLGRKLIMNPAN. The segment at residues 43–71 is a cross-link (cyclopeptide (Gly-Asn)); that stretch reads GASCGETCFTGICFTAGCSCNPWPTCTRN. Intrachain disulfides connect C46/C60, C50/C62, and C55/C68. Positions 72–78 are cleaved as a propeptide — removed in mature form; the sequence is GLNPESI.

Post-translationally, this is a cyclic peptide.

In terms of biological role, probably participates in a plant defense mechanism. This Chassalia chartacea (Chassalia curviflora) protein is Chassatide C4.